The primary structure comprises 675 residues: Potassium-transporting ATPase ATP-binding subunit (675 aa).

Helical transmembrane passes span 34–54 (IMFV…FPDI), 65–85 (LITI…SEAF), 216–236 (IALF…IVTL), and 245–265 (LILP…TTIG). Aspartate 304 acts as the 4-aspartylphosphate intermediate in catalysis. ATP is bound by residues aspartate 341, glutamate 345, 372-379 (FTAETRMS), and lysine 390. Positions 513 and 517 each coordinate Mg(2+). The next 3 membrane-spanning stretches (helical) occupy residues 569-591 (ALTT…ALMM), 611-631 (AIIS…PIAM), and 644-664 (IFIN…FLGI).

The protein belongs to the cation transport ATPase (P-type) (TC 3.A.3) family. Type IA subfamily. The system is composed of three essential subunits: KdpA, KdpB and KdpC.

It is found in the cell membrane. It carries out the reaction K(+)(out) + ATP + H2O = K(+)(in) + ADP + phosphate + H(+). In terms of biological role, part of the high-affinity ATP-driven potassium transport (or Kdp) system, which catalyzes the hydrolysis of ATP coupled with the electrogenic transport of potassium into the cytoplasm. This subunit is responsible for energy coupling to the transport system and for the release of the potassium ions to the cytoplasm. This is Potassium-transporting ATPase ATP-binding subunit from Staphylococcus aureus (strain Newman).